We begin with the raw amino-acid sequence, 243 residues long: Nuclear protein UL4 homolog (243 aa).

The interval 193-226 (RPDDQTTPTPTPHQYTSQRRQPETNCPSPQPAFF) is disordered. Positions 205 to 219 (HQYTSQRRQPETNCP) are enriched in polar residues.

This sequence belongs to the alphaherpesvirinae HHV-1 UL4 family.

Its subcellular location is the host nucleus. The chain is Nuclear protein UL4 homolog from Varicella-zoster virus (strain Oka vaccine) (HHV-3).